A 340-amino-acid chain; its full sequence is MINVAVNGYGTIGKRVADAIIKQPDMKLVGVAKTSPNYEAFIAHRRGIRIYVPQQSIKKFEESGIPVAGTVEDLIKTSDIVVDTTPNGVGAQYKPIYLQLQRNAIFQGGEKAEVADISFSALCNYNEALGKKYIRVVSCNTTALLRTICTVNKVSKVEKVRATIVRRAADQKEVKKGPINSLVPDPATVPSHHAKDVNSVIRNLDIATMAVIAPTTLMHMHFINITLKDKVEKKDILSVLENTPRIVLISSKYDAEATAELVEVARDLKRDRNDIPEVMIFSDSIYVKDDEVMLMYAVHQESIVVPENIDAIRASMKLMSAEDSMRITNESLGILKGYLI.

Residues 11–12 (TI) and glycine 109 contribute to the NAD(+) site. A disulfide bond links cysteine 123 and cysteine 149. 138–140 (SCN) contacts D-glyceraldehyde 3-phosphate. Cysteine 139 (nucleophile) is an active-site residue. Residue arginine 167 coordinates NAD(+). 193-194 (HA) contributes to the D-glyceraldehyde 3-phosphate binding site. Glutamine 300 serves as a coordination point for NAD(+).

It belongs to the glyceraldehyde-3-phosphate dehydrogenase family. Homotetramer.

The protein localises to the cytoplasm. The enzyme catalyses D-glyceraldehyde 3-phosphate + phosphate + NADP(+) = (2R)-3-phospho-glyceroyl phosphate + NADPH + H(+). It carries out the reaction D-glyceraldehyde 3-phosphate + phosphate + NAD(+) = (2R)-3-phospho-glyceroyl phosphate + NADH + H(+). The protein operates within carbohydrate degradation; glycolysis; pyruvate from D-glyceraldehyde 3-phosphate: step 1/5. In terms of biological role, can use both NAD and NADP as cofactors, but exhibits a marked preference for NADP. This is Glyceraldehyde-3-phosphate dehydrogenase (gap) from Saccharolobus solfataricus (strain ATCC 35092 / DSM 1617 / JCM 11322 / P2) (Sulfolobus solfataricus).